Reading from the N-terminus, the 275-residue chain is Polyamine aminopropyltransferase (275 aa).

One can recognise a PABS domain in the interval 2–235; sequence ELWFTEKQTK…GLWTFTIGSK (234 aa). An S-methyl-5'-thioadenosine-binding site is contributed by glutamine 31. 2 residues coordinate spermidine: histidine 62 and aspartate 86. S-methyl-5'-thioadenosine contacts are provided by residues glutamate 106 and 137–138; that span reads DG. Aspartate 155 serves as the catalytic Proton acceptor. Spermidine is bound at residue 155-158; sequence DSTE. Residue proline 162 participates in S-methyl-5'-thioadenosine binding.

This sequence belongs to the spermidine/spermine synthase family. Homodimer or homotetramer.

The protein localises to the cytoplasm. It catalyses the reaction S-adenosyl 3-(methylsulfanyl)propylamine + putrescine = S-methyl-5'-thioadenosine + spermidine + H(+). It participates in amine and polyamine biosynthesis; spermidine biosynthesis; spermidine from putrescine: step 1/1. Catalyzes the irreversible transfer of a propylamine group from the amino donor S-adenosylmethioninamine (decarboxy-AdoMet) to putrescine (1,4-diaminobutane) to yield spermidine. In Bacillus cytotoxicus (strain DSM 22905 / CIP 110041 / 391-98 / NVH 391-98), this protein is Polyamine aminopropyltransferase.